The sequence spans 260 residues: Indole-3-glycerol phosphate synthase (260 aa).

The protein belongs to the TrpC family.

The enzyme catalyses 1-(2-carboxyphenylamino)-1-deoxy-D-ribulose 5-phosphate + H(+) = (1S,2R)-1-C-(indol-3-yl)glycerol 3-phosphate + CO2 + H2O. Its pathway is amino-acid biosynthesis; L-tryptophan biosynthesis; L-tryptophan from chorismate: step 4/5. The polypeptide is Indole-3-glycerol phosphate synthase (Staphylococcus aureus (strain Mu3 / ATCC 700698)).